The sequence spans 286 residues: uncharacterized protein (286 aa).

An N-terminal signal peptide occupies residues 1–19 (MISKEYISLLSALLTKGYS).

This is an uncharacterized protein from Acidianus filamentous virus 2 (isolate Italy/Pozzuoli) (AFV-2).